A 508-amino-acid chain; its full sequence is Cytochrome P450 monooxygenase BipB (508 aa).

A helical transmembrane segment spans residues 11-31 (ELAWLLLGPLVLFYVFKLFIY). Cysteine 448 contacts heme.

This sequence belongs to the cytochrome P450 family. The cofactor is heme.

Its subcellular location is the membrane. It functions in the pathway sesquiterpene biosynthesis. Cytochrome P450 monooxygenase; part of the minimal biosynthetic bip cluster that mediates the biosynthesis of bridged polycyclic sesquiterpenoids derived from sativene, isosativene, and longifolene. The sesquiterpene cyclase BipA acts as a versatile cyclase that converts farnesyl diphosphate (FPP) into (-)-sativene as the dominant product and (-)-isosativene and (-)-longifolene as minor ones. The cytochrome P450 monooxygenase BipB then hydroxylates different enantiomeric sesquiterpenes, such as (-)-longifolene and (+)-longifolene, at C-15 and C-14. The C-15- or both C-15- and C-14-hydroxylated products are further oxidized by unclustered oxidases, resulting in a structurally diverse array of sesquiterpenoids. The BipB-catalyzed hydroxylation at C-15 serves as an initiator for the oxidation by the unclustered oxidases. The protein is Cytochrome P450 monooxygenase BipB of Cochliobolus sativus (Common root rot and spot blotch fungus).